The chain runs to 366 residues: Chorismate synthase (366 aa).

Arg48 lines the NADP(+) pocket. FMN is bound by residues 125–127, 238–239, Gly278, 293–297, and Arg319; these read RSS, NA, and KPTSS.

The protein belongs to the chorismate synthase family. Homotetramer. Requires FMNH2 as cofactor.

The enzyme catalyses 5-O-(1-carboxyvinyl)-3-phosphoshikimate = chorismate + phosphate. It functions in the pathway metabolic intermediate biosynthesis; chorismate biosynthesis; chorismate from D-erythrose 4-phosphate and phosphoenolpyruvate: step 7/7. Catalyzes the anti-1,4-elimination of the C-3 phosphate and the C-6 proR hydrogen from 5-enolpyruvylshikimate-3-phosphate (EPSP) to yield chorismate, which is the branch point compound that serves as the starting substrate for the three terminal pathways of aromatic amino acid biosynthesis. This reaction introduces a second double bond into the aromatic ring system. This is Chorismate synthase from Hydrogenovibrio crunogenus (strain DSM 25203 / XCL-2) (Thiomicrospira crunogena).